The primary structure comprises 195 residues: Shikimate kinase (195 aa).

31 to 36 is an ATP binding site; sequence GAGKSC. Serine 35 lines the Mg(2+) pocket. 3 residues coordinate substrate: aspartate 53, arginine 77, and glycine 99. Arginine 137 contributes to the ATP binding site. Arginine 156 is a substrate binding site.

The protein belongs to the shikimate kinase family. Monomer. Requires Mg(2+) as cofactor.

Its subcellular location is the cytoplasm. The catalysed reaction is shikimate + ATP = 3-phosphoshikimate + ADP + H(+). The protein operates within metabolic intermediate biosynthesis; chorismate biosynthesis; chorismate from D-erythrose 4-phosphate and phosphoenolpyruvate: step 5/7. Functionally, catalyzes the specific phosphorylation of the 3-hydroxyl group of shikimic acid using ATP as a cosubstrate. In Paramagnetospirillum magneticum (strain ATCC 700264 / AMB-1) (Magnetospirillum magneticum), this protein is Shikimate kinase.